The sequence spans 406 residues: uncharacterized protein (406 aa).

The protein to S.pombe SpAC12C2.04.

Its subcellular location is the cytoplasm. It localises to the nucleus. This is an uncharacterized protein from Schizosaccharomyces pombe (strain 972 / ATCC 24843) (Fission yeast).